Reading from the N-terminus, the 263-residue chain is MFDIGLNITSSQFDHDRDEMIARARAAGVSNMLFTGTSLEESEKACAFARRYEGCWSTAGVHPHDASTWNDESAARLRALAGEAQVVAIGECGLDFNRNFSTPAEQEHAFTEQLRLAAELALPVFLHCRDAHARFLALLDPWLDKLPGAVLHCFTGTEQEARETMARGLYLGITGWVCDERRGLELRALLPVIPADRLLLETDAPYLLPRDLAPRPKSRRNEPCWLPHILKQVAQWRGEDPAWLEATTDANAARLFLKNASPA.

Residues Glu91, His127, and His152 each coordinate a divalent metal cation.

It belongs to the metallo-dependent hydrolases superfamily. TatD-type hydrolase family. TatD subfamily. In terms of assembly, monomer. Mg(2+) is required as a cofactor.

Its subcellular location is the cytoplasm. Its function is as follows. 3'-5' exonuclease that prefers single-stranded DNA and RNA. May play a role in the H(2)O(2)-induced DNA damage repair. The sequence is that of 3'-5' ssDNA/RNA exonuclease TatD from Cronobacter sakazakii (strain ATCC BAA-894) (Enterobacter sakazakii).